A 353-amino-acid polypeptide reads, in one-letter code: Rhodopsin (353 aa).

Residues 1–36 (MNGTEGPYFYIPMVNTTGIVRSPYEYPQYYLVNPAA) are Extracellular-facing. Residues Asn-2 and Asn-15 are each glycosylated (N-linked (GlcNAc...) asparagine). A helical transmembrane segment spans residues 37–61 (YAALGAYMFLLILVGFPINFLTLYV). Residues 62–73 (TIEHKKLRTPLN) are Cytoplasmic-facing. Residues 74–96 (YILLNLAVANLFMVFGGFTTTMY) form a helical membrane-spanning segment. The Extracellular portion of the chain corresponds to 97 to 110 (TSMHGYFVLGRLGC). A disulfide bridge connects residues Cys-110 and Cys-187. A helical membrane pass occupies residues 111-133 (NLEGFFATLGGEIALWSLVVLAI). The 'Ionic lock' involved in activated form stabilization motif lies at 134–136 (ERW). Over 134-152 (ERWMVVCKPISNFRFGEDH) the chain is Cytoplasmic. A helical transmembrane segment spans residues 153-173 (AIMGLAFTWVMAAACAVPPLV). The Extracellular portion of the chain corresponds to 174-202 (GWSRYIPEGMQCSCGIDYYTRAEGFNNES). Residue Asn-200 is glycosylated (N-linked (GlcNAc...) asparagine). A helical transmembrane segment spans residues 203-224 (FVIYMFVCHFLIPLVVVFFCYG). Residues 225–252 (RLLCAVKEAAAAQQESETTQRAEREVSR) lie on the Cytoplasmic side of the membrane. Residues 253-274 (MVVIMVVAFLICWCPYAGVAWY) form a helical membrane-spanning segment. The Extracellular portion of the chain corresponds to 275–286 (IFTHQGSEFGPL). A helical transmembrane segment spans residues 287-308 (FMTFPAFFAKSSSIYNPMIYIC). N6-(retinylidene)lysine is present on Lys-296. The Cytoplasmic segment spans residues 309–353 (MNKQFRHCMITTLCCGKNPFEEEEGASTTSKTEASSVSSSSVSPA). S-palmitoyl cysteine attachment occurs at residues Cys-322 and Cys-323. The interval 330-353 (EEEGASTTSKTEASSVSSSSVSPA) is disordered. Residues 334–353 (ASTTSKTEASSVSSSSVSPA) are compositionally biased toward low complexity.

This sequence belongs to the G-protein coupled receptor 1 family. Opsin subfamily. Phosphorylated on some or all of the serine and threonine residues present in the C-terminal region. Post-translationally, contains one covalently linked retinal chromophore.

Its subcellular location is the membrane. The protein localises to the cell projection. It localises to the cilium. The protein resides in the photoreceptor outer segment. Its function is as follows. Photoreceptor required for image-forming vision at low light intensity. While most salt water fish species use retinal as chromophore, most freshwater fish use 3-dehydroretinal, or a mixture of retinal and 3-dehydroretinal. Light-induced isomerization of 11-cis to all-trans retinal triggers a conformational change that activates signaling via G-proteins. Subsequent receptor phosphorylation mediates displacement of the bound G-protein alpha subunit by arrestin and terminates signaling. This is Rhodopsin (rho) from Chelon saliens (Leaping mullet).